Here is a 261-residue protein sequence, read N- to C-terminus: Chanoclavine-I dehydrogenase easD (261 aa).

Positions 1-20 are cleaved as a signal peptide; the sequence is MPSMTSKVFAITGGASGIGA. Ile18 lines the NADP(+) pocket. A glycan (N-linked (GlcNAc...) asparagine) is linked at Asn43. Positions 66, 132, 166, 170, and 201 each coordinate NADP(+). Residue Tyr166 is the Proton donor of the active site. The active-site Lowers pKa of active site Tyr is the Lys170.

This sequence belongs to the short-chain dehydrogenases/reductases (SDR) family. As to quaternary structure, homotetramer.

The catalysed reaction is chanoclavine-I + NAD(+) = chanoclavine-I aldehyde + NADH + H(+). It participates in alkaloid biosynthesis; ergot alkaloid biosynthesis. Chanoclavine-I dehydrogenase; part of the gene cluster that mediates the biosynthesis of fungal ergot alkaloid. DmaW catalyzes the first step of ergot alkaloid biosynthesis by condensing dimethylallyl diphosphate (DMAP) and tryptophan to form 4-dimethylallyl-L-tryptophan. The second step is catalyzed by the methyltransferase easF that methylates 4-dimethylallyl-L-tryptophan in the presence of S-adenosyl-L-methionine, resulting in the formation of 4-dimethylallyl-L-abrine. The catalase easC and the FAD-dependent oxidoreductase easE then transform 4-dimethylallyl-L-abrine to chanoclavine-I which is further oxidized by easD in the presence of NAD(+), resulting in the formation of chanoclavine-I aldehyde. Agroclavine dehydrogenase easG then mediates the conversion of chanoclavine-I aldehyde to agroclavine via a non-enzymatic adduct reaction: the substrate is an iminium intermediate that is formed spontaneously from chanoclavine-I aldehyde in the presence of glutathione. The presence of easA is not required to complete this reaction. Further conversion of agroclavine to paspalic acid is a two-step process involving oxidation of agroclavine to elymoclavine and of elymoclavine to paspalic acid, the second step being performed by the elymoclavine oxidase cloA. Paspalic acid is then further converted to D-lysergic acid. Ergopeptines are assembled from D-lysergic acid and three different amino acids by the D-lysergyl-peptide-synthetases composed each of a monomudular and a trimodular nonribosomal peptide synthetase subunit. LpsB and lpsC encode the monomodular subunits responsible for D-lysergic acid activation and incorporation into the ergopeptine backbone. LpsA1 and A2 subunits encode the trimodular nonribosomal peptide synthetase assembling the tripeptide portion of ergopeptines. LpsA1 is responsible for formation of the major ergopeptine, ergotamine, and lpsA2 for alpha-ergocryptine, the minor ergopeptine of the total alkaloid mixture elaborated by C.purpurea. D-lysergyl-tripeptides are assembled by the nonribosomal peptide synthetases and released as N-(D-lysergyl-aminoacyl)-lactams. Cyclolization of the D-lysergyl-tripeptides is performed by the Fe(2+)/2-ketoglutarate-dependent dioxygenase easH which introduces a hydroxyl group into N-(D-lysergyl-aminoacyl)-lactam at alpha-C of the aminoacyl residue followed by spontaneous condensation with the terminal lactam carbonyl group. This is Chanoclavine-I dehydrogenase easD from Claviceps purpurea (Ergot fungus).